The sequence spans 265 residues: Probable U2 small nuclear ribonucleoprotein A' (265 aa).

4 LRR repeats span residues 20 to 41 (RERE…GATL), 43 to 64 (QFDT…PHLP), 65 to 86 (RLKC…LEEA), and 89 to 110 (NLGS…EPLV). The region spanning 123-161 (NPVSTKPNYREYMAYKFPQLRLLDFRKIKQKDRQAAQEF) is the LRRCT domain.

The protein belongs to the U2 small nuclear ribonucleoprotein A family. Interacts with the SMN complex.

The protein resides in the nucleus. In terms of biological role, involved in pre-mRNA splicing as component of the spliceosome. Associated with sn-RNP U2, where it contributes to the binding of stem loop IV of U2 snRNA. In the germ line, has a role in oogenesis, by regulating spermatogenesis and nurse cell nuclei chromatin decondensation and dispersal, probably by regulating the splicing of proteins necessary for germline differentiation such as the meiotic protein mei-P26. This chain is Probable U2 small nuclear ribonucleoprotein A' (U2A), found in Drosophila melanogaster (Fruit fly).